Consider the following 303-residue polypeptide: Coenzyme PQQ synthesis protein B (303 aa).

The protein belongs to the PqqB family.

It participates in cofactor biosynthesis; pyrroloquinoline quinone biosynthesis. May be involved in the transport of PQQ or its precursor to the periplasm. The chain is Coenzyme PQQ synthesis protein B from Acinetobacter baumannii (strain AYE).